The primary structure comprises 209 residues: Orotate phosphoribosyltransferase (209 aa).

5-phospho-alpha-D-ribose 1-diphosphate contacts are provided by residues Arg96, Lys100, His102, and 122–130; that span reads EDLISTGGS. An orotate-binding site is contributed by Ser126.

This sequence belongs to the purine/pyrimidine phosphoribosyltransferase family. PyrE subfamily. Homodimer. Mg(2+) is required as a cofactor.

The enzyme catalyses orotidine 5'-phosphate + diphosphate = orotate + 5-phospho-alpha-D-ribose 1-diphosphate. It participates in pyrimidine metabolism; UMP biosynthesis via de novo pathway; UMP from orotate: step 1/2. Catalyzes the transfer of a ribosyl phosphate group from 5-phosphoribose 1-diphosphate to orotate, leading to the formation of orotidine monophosphate (OMP). In Streptococcus pyogenes serotype M2 (strain MGAS10270), this protein is Orotate phosphoribosyltransferase.